A 243-amino-acid chain; its full sequence is VQ motif-containing protein 33 (243 aa).

The segment covering 1-16 has biased composition (polar residues); that stretch reads MEVSTSSMSSKPEQMQ. The interval 1–49 is disordered; sequence MEVSTSSMSSKPEQMQNPPPMISSPRFQPQIISPHHHDQHQHLSNPYPT. The VQ signature appears at 59-68; the sequence is FKQVVQMLTG. Disordered regions lie at residues 69 to 98 and 138 to 162; these read SSTD…SIPP and FTGG…SENI. Residues S83 and S95 each carry the phosphoserine modification. Polar residues predominate over residues 84 to 98; it reads PVNNNNKGSSFSIPP. Residue T139 is modified to Phosphothreonine. 5 positions are modified to phosphoserine: S148, S152, S165, S167, and S178. Residues 149–162 are compositionally biased toward low complexity; sequence PRFSPRNSSSSENI. The interval 180-243 is disordered; it reads VTPLRSNDDP…FPVASPARNS (64 aa). At T181 the chain carries Phosphothreonine. The segment covering 191–201 has biased composition (polar residues); that stretch reads NKSSPLSLGNS. S218 and S221 each carry phosphoserine. T222 carries the phosphothreonine modification. Position 238 is a phosphoserine (S238).

In terms of processing, phosphorylated on serine and threonine residues by MPK6.

It localises to the nucleus. Functionally, may modulate WRKY transcription factor activities. The polypeptide is VQ motif-containing protein 33 (Arabidopsis thaliana (Mouse-ear cress)).